A 397-amino-acid chain; its full sequence is Lysophospholipid transporter LplT (397 aa).

Helical transmembrane passes span 21 to 41 (SAQFLSAFGDNALLFATLALL), 53 to 73 (ILQMVFVGAYILFAPFVGQVA), 91 to 111 (LGAASICFGFNPFIGYTLVGI), 139 to 159 (LMESSTIAAILLGSVAGGVLA), 164 to 184 (LAALGICAVVYAGAVVANLFI), 229 to 249 (WGAGVTLRFLLVLWVPTALGI), 257 to 277 (YLNAMVAVGIVVGAGAAAKLV), 281 to 301 (TVRRCMPAGILIGVGVLFFSL), 304 to 324 (ALLPAYGLLILIGILGGFFIV), 344 to 364 (IAVQNLGENTAMLLMLGLYSL), and 372 to 392 (VVGIGVGFGALFALAITGLWI).

Belongs to the major facilitator superfamily. LplT (TC 2.A.1.42) family.

The protein localises to the cell inner membrane. In terms of biological role, catalyzes the facilitated diffusion of 2-acyl-glycero-3-phosphoethanolamine (2-acyl-GPE) into the cell. The polypeptide is Lysophospholipid transporter LplT (Enterobacter sp. (strain 638)).